We begin with the raw amino-acid sequence, 110 residues long: Nucleoid-associated protein PsycPRwf_1729 (110 aa).

The protein belongs to the YbaB/EbfC family. Homodimer.

It is found in the cytoplasm. The protein resides in the nucleoid. Functionally, binds to DNA and alters its conformation. May be involved in regulation of gene expression, nucleoid organization and DNA protection. The polypeptide is Nucleoid-associated protein PsycPRwf_1729 (Psychrobacter sp. (strain PRwf-1)).